The following is a 1333-amino-acid chain: Protein CLASP-1 (1333 aa).

Residues 168–206 form an HEAT 1 repeat; the sequence is LIPQLCRLTNDPNSEVRDASTNCLVDLMVFGGKSIIAKI. The segment covering 269–305 has biased composition (low complexity); that stretch reads STTSFTSSARLSTPPRTNAPSLSPSPSTPSPLSLPAA. Residues 269-311 are disordered; sequence STTSFTSSARLSTPPRTNAPSLSPSPSTPSPLSLPAANGRSRD. Positions 360–389 form a coiled coil; the sequence is SNSDVREKLETANSVLRNANEDWSKRANQL. Disordered regions lie at residues 579–711 and 764–792; these read QKML…HQTP and TPPK…NSSN. The segment covering 601–611 has biased composition (low complexity); sequence NQKQPQQPQQN. Over residues 612–644 the composition is skewed to polar residues; sequence ISQKFLSQRSASALDNKSQVLSIAKPQQSNPSR. Composition is skewed to low complexity over residues 657 to 669 and 686 to 707; these read SSTS…VRSS and TNFN…STST. Residues 1266 to 1304 form an HEAT 2 repeat; it reads VAPCFVSAYDSTSSSVRKCAVFGLVALVQRVGMPRLETH.

The protein belongs to the CLASP family.

Its subcellular location is the cytoplasm. It localises to the cytoskeleton. Its function is as follows. Microtubule plus-end tracking protein that promotes the stabilization of dynamic microtubules. The sequence is that of Protein CLASP-1 from Caenorhabditis briggsae.